Reading from the N-terminus, the 96-residue chain is Growth-regulated alpha protein (96 aa).

The signal sequence occupies residues 1 to 24 (MVSATRSLLCAALPVLATSRQATG). Cystine bridges form between Cys33-Cys59 and Cys35-Cys75.

It belongs to the intercrine alpha (chemokine CxC) family. As to quaternary structure, monomer and homodimer. In terms of tissue distribution, at least expressed in the lung and trachea.

Its subcellular location is the secreted. Has chemotactic activity for neutrophils. Contributes to neutrophil activation during inflammation. The sequence is that of Growth-regulated alpha protein (Cxcl1) from Rattus norvegicus (Rat).